Here is a 75-residue protein sequence, read N- to C-terminus: Putative UPF0377 protein YAL067W-A (75 aa).

It belongs to the UPF0377 family.

The chain is Putative UPF0377 protein YAL067W-A from Saccharomyces cerevisiae (strain ATCC 204508 / S288c) (Baker's yeast).